A 218-amino-acid polypeptide reads, in one-letter code: Protein-methionine-sulfoxide reductase heme-binding subunit MsrQ (218 aa).

Helical transmembrane passes span 8 to 28 (VIVAKTLVHAAALAPIALLGW), 60 to 80 (FLLITLAITPLRQLTGQAVLI), 86 to 106 (LGLYAFFYATVHLAAYLTLDL), 121 to 141 (PYITVGFAAWLLLMPLAITST), and 155 to 175 (VHMLIYPIGLLAVLHFWWLVK).

This sequence belongs to the MsrQ family. In terms of assembly, heterodimer of a catalytic subunit (MsrP) and a heme-binding subunit (MsrQ). It depends on FMN as a cofactor. Heme b is required as a cofactor.

The protein resides in the cell inner membrane. Its function is as follows. Part of the MsrPQ system that repairs oxidized periplasmic proteins containing methionine sulfoxide residues (Met-O), using respiratory chain electrons. Thus protects these proteins from oxidative-stress damage caused by reactive species of oxygen and chlorine generated by the host defense mechanisms. MsrPQ is essential for the maintenance of envelope integrity under bleach stress, rescuing a wide series of structurally unrelated periplasmic proteins from methionine oxidation. MsrQ provides electrons for reduction to the reductase catalytic subunit MsrP, using the quinone pool of the respiratory chain. This is Protein-methionine-sulfoxide reductase heme-binding subunit MsrQ from Xanthomonas oryzae pv. oryzae (strain MAFF 311018).